The sequence spans 169 residues: Phosphopantetheine adenylyltransferase (169 aa).

T13 contributes to the substrate binding site. ATP contacts are provided by residues 13-14 (TF) and H21. Substrate-binding residues include K45, L82, and R96. ATP-binding positions include 97-99 (GLR), E107, and 132-138 (HQFISSR).

The protein belongs to the bacterial CoaD family. In terms of assembly, homohexamer. It depends on Mg(2+) as a cofactor.

Its subcellular location is the cytoplasm. It catalyses the reaction (R)-4'-phosphopantetheine + ATP + H(+) = 3'-dephospho-CoA + diphosphate. The protein operates within cofactor biosynthesis; coenzyme A biosynthesis; CoA from (R)-pantothenate: step 4/5. Its function is as follows. Reversibly transfers an adenylyl group from ATP to 4'-phosphopantetheine, yielding dephospho-CoA (dPCoA) and pyrophosphate. The protein is Phosphopantetheine adenylyltransferase of Acidiphilium cryptum (strain JF-5).